We begin with the raw amino-acid sequence, 239 residues long: Ribosomal RNA small subunit methyltransferase G (239 aa).

Residues G77, F82, 128–129, and R146 each bind S-adenosyl-L-methionine; that span reads AE. Positions 216–239 are disordered; that stretch reads KRRQTSKKYPRKPGTPNKSPLVES.

It belongs to the methyltransferase superfamily. RNA methyltransferase RsmG family.

It is found in the cytoplasm. Functionally, specifically methylates the N7 position of guanine in position 535 of 16S rRNA. This Staphylococcus epidermidis (strain ATCC 35984 / DSM 28319 / BCRC 17069 / CCUG 31568 / BM 3577 / RP62A) protein is Ribosomal RNA small subunit methyltransferase G.